The sequence spans 163 residues: UPF0763 protein C8J_0930 (163 aa).

Belongs to the UPF0763 family.

In Campylobacter jejuni subsp. jejuni serotype O:6 (strain 81116 / NCTC 11828), this protein is UPF0763 protein C8J_0930.